The chain runs to 273 residues: Histidine racemase (273 aa).

C72 serves as the catalytic Proton acceptor. Catalysis depends on C211, which acts as the Proton donor.

This sequence belongs to the histidine racemase family. Homodimer.

The protein resides in the cytoplasm. The catalysed reaction is L-histidine = D-histidine. Functionally, isomerase that catalyzes the conversion of L-histidine to D-histidine. Functions the biosynthesis of the metallophore staphylopine, which is involved in the acquisition of nickel, cobalt, zinc, copper, and iron, and thus enables bacterial growth inside the host, where metal access is limited. Therefore, this enzyme probably contributes to staphylococcal virulence. The reaction is reversible in vitro, the enzyme can produce D-histidine from the L-stereoisomer and vice versa. Appears to be specific for histidine as it cannot use other amino acids as substrate, including L-alanine and L-methionine. The protein is Histidine racemase of Staphylococcus aureus (strain Mu50 / ATCC 700699).